Reading from the N-terminus, the 181-residue chain is Adenylate kinase (181 aa).

10–15 (GAGKGT) is an ATP binding site. The interval 30–59 (STGDLFRDNITNETELGVEAKRYLDAGDLV) is NMP. AMP contacts are provided by residues T31, R36, 57–59 (DLV), 85–88 (GYPR), and Q92. Positions 126–132 (GRGRADD) are LID. R127 is a binding site for ATP. Positions 129 and 140 each coordinate AMP. G166 lines the ATP pocket.

It belongs to the adenylate kinase family. In terms of assembly, monomer.

It is found in the cytoplasm. It carries out the reaction AMP + ATP = 2 ADP. Its pathway is purine metabolism; AMP biosynthesis via salvage pathway; AMP from ADP: step 1/1. Its function is as follows. Catalyzes the reversible transfer of the terminal phosphate group between ATP and AMP. Plays an important role in cellular energy homeostasis and in adenine nucleotide metabolism. The polypeptide is Adenylate kinase (Mycobacterium sp. (strain MCS)).